The primary structure comprises 170 residues: Ribosome maturation factor RimM (170 aa).

Residues 93–165 enclose the PRC barrel domain; that stretch reads PDEFHDHELI…RVVIDPPPGL (73 aa).

Belongs to the RimM family. As to quaternary structure, binds ribosomal protein uS19.

The protein resides in the cytoplasm. Functionally, an accessory protein needed during the final step in the assembly of 30S ribosomal subunit, possibly for assembly of the head region. Essential for efficient processing of 16S rRNA. May be needed both before and after RbfA during the maturation of 16S rRNA. It has affinity for free ribosomal 30S subunits but not for 70S ribosomes. The sequence is that of Ribosome maturation factor RimM from Thermobifida fusca (strain YX).